Consider the following 100-residue polypeptide: UPF0235 protein TC_0667 (100 aa).

It belongs to the UPF0235 family.

The polypeptide is UPF0235 protein TC_0667 (Chlamydia muridarum (strain MoPn / Nigg)).